A 246-amino-acid polypeptide reads, in one-letter code: Mast cell protease 2 (246 aa).

Positions 1 to 19 are cleaved as a signal peptide; it reads MHRPPLPLVLLLLCCRAQA. Residues 20 to 21 constitute a propeptide, activation peptide; the sequence is GE. Residues 22–244 form the Peptidase S1 domain; it reads IIGGTESKPH…YRPWIDEVLK (223 aa). An intrachain disulfide couples cysteine 51 to cysteine 67. Residues histidine 66 and aspartate 109 each act as charge relay system in the active site. Asparagine 120 is a glycosylation site (N-linked (GlcNAc...) asparagine). 2 disulfide bridges follow: cysteine 143–cysteine 208 and cysteine 174–cysteine 187. The Charge relay system role is filled by serine 202.

Belongs to the peptidase S1 family. Granzyme subfamily.

It localises to the secreted. The protein resides in the cytoplasmic granule. Its function is as follows. Putative mast cell chymase. In Ovis aries (Sheep), this protein is Mast cell protease 2.